A 413-amino-acid chain; its full sequence is Arginine biosynthesis bifunctional protein ArgJ 1 (413 aa).

Residues Thr-154, Lys-180, Thr-191, Glu-277, Asn-408, and Thr-413 each contribute to the substrate site. The Nucleophile role is filled by Thr-191.

It belongs to the ArgJ family. Heterotetramer of two alpha and two beta chains.

It is found in the cytoplasm. The enzyme catalyses N(2)-acetyl-L-ornithine + L-glutamate = N-acetyl-L-glutamate + L-ornithine. The catalysed reaction is L-glutamate + acetyl-CoA = N-acetyl-L-glutamate + CoA + H(+). It functions in the pathway amino-acid biosynthesis; L-arginine biosynthesis; L-ornithine and N-acetyl-L-glutamate from L-glutamate and N(2)-acetyl-L-ornithine (cyclic): step 1/1. It participates in amino-acid biosynthesis; L-arginine biosynthesis; N(2)-acetyl-L-ornithine from L-glutamate: step 1/4. Its function is as follows. Catalyzes two activities which are involved in the cyclic version of arginine biosynthesis: the synthesis of N-acetylglutamate from glutamate and acetyl-CoA as the acetyl donor, and of ornithine by transacetylation between N(2)-acetylornithine and glutamate. This Nostoc sp. (strain PCC 7120 / SAG 25.82 / UTEX 2576) protein is Arginine biosynthesis bifunctional protein ArgJ 1.